We begin with the raw amino-acid sequence, 948 residues long: MSEMVDLKKFLTELGKTQKELKNVIEQAKDIGLELKTNSKMTPEQAGKLYKYIVDGIKEQIQANKPTKNPEQDNKDDLNITATPKPLNKKVSKTPKKEETKSQPKPKKTKEKKKEAPALIAKKKGGIEIVNTFEDQTLENTPKVVSHSQIEKAKQKLQEIQKSREALSKLTQSNTNNANSTNNANNVNNAKKEISEVKKQEQEIKRHENIKRRTGFRVIKRNDETENETENSVAESKKPTQSAAAIFEDIKKEWQEKDKQEAKKAKKPSKPKATPTAKNNKSHKIDFSDARDFKGNDIYDDETDEILLFDLHEQDNLNKEEEEKEIRQNINDRVRVQRKNPWMNESGIKRQSKKKRAFRNDNSQKVIQSAISIPEEVRVYEFAQKANLNLADVIKTLFNLGLMVTKNDFLDKDSIEILAEEFHLEISVQNTLEEFEVEEVLEGVKKERPPVVTIMGHVDHGKTSLLDKIRDKRVAHTEAGGITQHIGAYMVEKNDKWVSFIDTPGHEAFSQMRNRGAQVTDIAVIVIAADDGVKQQTIEALEHAKAANVPVIFAMNKMDKPNVNPDKLKAECAELGYNPVDWGGEYEFIPVSAKTGDGIDNLLETILIQADIMELKAIEEGSARAVVLEGSVEKGRGAVATVIVQSGTLSVGDSFFAETAFGKVRTMTDDQGKSIQSLKPSMVALITGLSEVPPAGSVLIGVENDSIARLQAQKRATYLRQKALSKSTKVSFDELSEMVANKELKNIPVVIKADTQGSLEAIKNSLLELNNEEVAIQVIHSGVGGITENDLSLVSSSEHAVILGFNIRPTGNVKNKAKEYNVSIKTYTVIYALIEEMRSLLLGLMSPIIEEEHTGQAEVRETFNIPKVGTIAGCVVSDGVIARGIKARLIRDGVVIHTGEILSLKRFKDDVKEVSKGYECGIMLDNYNEIKVGDVFETYKEIHKKRTL.

3 disordered regions span residues 61–120 (IQAN…PALI), 162–243 (KSRE…TQSA), and 255–285 (QEKD…SHKI). Positions 68 to 78 (KNPEQDNKDDL) are enriched in basic and acidic residues. A compositionally biased stretch (low complexity) spans 173–189 (SNTNNANSTNNANNVNN). A compositionally biased stretch (basic and acidic residues) spans 190-207 (AKKEISEVKKQEQEIKRH). A compositionally biased stretch (basic residues) spans 208 to 219 (ENIKRRTGFRVI). Residues 230–243 (ENSVAESKKPTQSA) are compositionally biased toward polar residues. Residues 447-616 (ERPPVVTIMG…LIQADIMELK (170 aa)) enclose the tr-type G domain. The segment at 456-463 (GHVDHGKT) is G1. 456–463 (GHVDHGKT) provides a ligand contact to GTP. Positions 481 to 485 (GITQH) are G2. The interval 502–505 (DTPG) is G3. Residues 502–506 (DTPGH) and 556–559 (NKMD) contribute to the GTP site. The tract at residues 556–559 (NKMD) is G4. The tract at residues 592 to 594 (SAK) is G5.

Belongs to the TRAFAC class translation factor GTPase superfamily. Classic translation factor GTPase family. IF-2 subfamily.

It is found in the cytoplasm. Its function is as follows. One of the essential components for the initiation of protein synthesis. Protects formylmethionyl-tRNA from spontaneous hydrolysis and promotes its binding to the 30S ribosomal subunits. Also involved in the hydrolysis of GTP during the formation of the 70S ribosomal complex. This is Translation initiation factor IF-2 from Helicobacter pylori (strain Shi470).